The following is a 113-amino-acid chain: Large ribosomal subunit protein uL22 (113 aa).

It belongs to the universal ribosomal protein uL22 family. As to quaternary structure, part of the 50S ribosomal subunit.

In terms of biological role, this protein binds specifically to 23S rRNA; its binding is stimulated by other ribosomal proteins, e.g. L4, L17, and L20. It is important during the early stages of 50S assembly. It makes multiple contacts with different domains of the 23S rRNA in the assembled 50S subunit and ribosome. The globular domain of the protein is located near the polypeptide exit tunnel on the outside of the subunit, while an extended beta-hairpin is found that lines the wall of the exit tunnel in the center of the 70S ribosome. This Carboxydothermus hydrogenoformans (strain ATCC BAA-161 / DSM 6008 / Z-2901) protein is Large ribosomal subunit protein uL22.